Reading from the N-terminus, the 377-residue chain is Chaperone protein DnaJ 1 (377 aa).

Residues 4-68 form the J domain; sequence DYYQTLGVTR…EIRQRYDQFG (65 aa). The segment at 136–218 adopts a CR-type zinc-finger fold; the sequence is GGEKEIRIPH…CNGVGRKQET (83 aa). Zn(2+)-binding residues include C149, C152, C166, C169, C192, C195, C206, and C209. 4 CXXCXGXG motif repeats span residues 149–156, 166–173, 192–199, and 206–213; these read CQVCEGTG, CGTCNGAG, CPTCNGSG, and CEACNGVG.

Belongs to the DnaJ family. In terms of assembly, homodimer. Requires Zn(2+) as cofactor.

It is found in the cytoplasm. Participates actively in the response to hyperosmotic and heat shock by preventing the aggregation of stress-denatured proteins and by disaggregating proteins, also in an autonomous, DnaK-independent fashion. Unfolded proteins bind initially to DnaJ; upon interaction with the DnaJ-bound protein, DnaK hydrolyzes its bound ATP, resulting in the formation of a stable complex. GrpE releases ADP from DnaK; ATP binding to DnaK triggers the release of the substrate protein, thus completing the reaction cycle. Several rounds of ATP-dependent interactions between DnaJ, DnaK and GrpE are required for fully efficient folding. Also involved, together with DnaK and GrpE, in the DNA replication of plasmids through activation of initiation proteins. The sequence is that of Chaperone protein DnaJ 1 from Synechocystis sp. (strain ATCC 27184 / PCC 6803 / Kazusa).